Here is a 460-residue protein sequence, read N- to C-terminus: Fumarate hydratase class II (460 aa).

Substrate is bound by residues 95-97 (SGT), 126-129 (HPND), 136-138 (SSN), and Thr-184. Residue His-185 is the Proton donor/acceptor of the active site. Ser-315 is an active-site residue. Substrate contacts are provided by residues Ser-316 and 321-323 (KVN).

This sequence belongs to the class-II fumarase/aspartase family. Fumarase subfamily. Homotetramer.

Its subcellular location is the cytoplasm. It carries out the reaction (S)-malate = fumarate + H2O. The protein operates within carbohydrate metabolism; tricarboxylic acid cycle; (S)-malate from fumarate: step 1/1. Involved in the TCA cycle. Catalyzes the stereospecific interconversion of fumarate to L-malate. The chain is Fumarate hydratase class II from Chlamydia pneumoniae (Chlamydophila pneumoniae).